The sequence spans 161 residues: Type IV major fimbrial protein FimA (161 aa).

The propeptide at 1-7 is leader sequence; sequence MKSLQKG. Phe-8 bears the N-methylphenylalanine mark. The chain crosses the membrane as a helical span at residues 8 to 28; the sequence is FTLIELMIVVAIIGILAAFAI. Cys-63 and Cys-106 are oxidised to a cystine.

The protein belongs to the N-Me-Phe pilin family. In terms of assembly, the pili are polar flexible filaments of about 5.4 nanometers diameter and 2.5 micrometers average length; they consist of only a single polypeptide chain arranged in a helical configuration of five subunits per turn in the assembled pilus.

It is found in the fimbrium. The protein localises to the membrane. Major component of the type IV fimbriae that plays an essential role in twitching motility, natural transformation, and protease secretion. This Dichelobacter nodosus (Bacteroides nodosus) protein is Type IV major fimbrial protein FimA (fimA).